Reading from the N-terminus, the 284-residue chain is T-cell leukemia homeobox protein 2 (284 aa).

3 disordered regions span residues Met-1–Phe-50, Gly-78–Gly-106, and Phe-139–Arg-166. Residues Thr-30–Phe-50 are compositionally biased toward gly residues. Residues Arg-87–Gly-96 show a composition bias toward pro residues. The segment at residues Arg-157–Thr-216 is a DNA-binding region (homeobox).

It is found in the nucleus. In terms of biological role, transcription activator that binds DNA elements with the consensus sequence 5'-CGGTAATTGG-3'. Binds DNA via its homeobox. Required for normal cell death of enteric neurons in the gastrointestinal tract. Required for normal development of the enteric nervous system, and for proper development of normal motility of the gastrointestinal tract. The protein is T-cell leukemia homeobox protein 2 (TLX2) of Homo sapiens (Human).